Here is a 561-residue protein sequence, read N- to C-terminus: Membrane protein insertase YidC (561 aa).

Helical transmembrane passes span 7–27 (ILIV…NQDY), 342–362 (LELT…FWLL), 368–388 (LLGN…GLFF), 438–458 (LGGC…YWVL), 469–489 (WMLW…PIIM), and 516–536 (PIIF…YWVV).

The protein belongs to the OXA1/ALB3/YidC family. Type 1 subfamily. As to quaternary structure, interacts with the Sec translocase complex via SecD. Specifically interacts with transmembrane segments of nascent integral membrane proteins during membrane integration.

It is found in the cell inner membrane. Functionally, required for the insertion and/or proper folding and/or complex formation of integral membrane proteins into the membrane. Involved in integration of membrane proteins that insert both dependently and independently of the Sec translocase complex, as well as at least some lipoproteins. Aids folding of multispanning membrane proteins. The protein is Membrane protein insertase YidC of Pseudomonas entomophila (strain L48).